The chain runs to 297 residues: Small ribosomal subunit biogenesis GTPase RsgA (297 aa).

The CP-type G domain maps to 65–223 (INEIGRPAVA…IADTPGFSAI (159 aa)). Residues 114 to 117 (SKSD) and 166 to 174 (GQSGAGKST) contribute to the GTP site. Zn(2+) is bound by residues Cys247, Cys252, His254, and Cys260.

It belongs to the TRAFAC class YlqF/YawG GTPase family. RsgA subfamily. As to quaternary structure, monomer. Associates with 30S ribosomal subunit, binds 16S rRNA. It depends on Zn(2+) as a cofactor.

The protein localises to the cytoplasm. Functionally, one of several proteins that assist in the late maturation steps of the functional core of the 30S ribosomal subunit. Helps release RbfA from mature subunits. May play a role in the assembly of ribosomal proteins into the subunit. Circularly permuted GTPase that catalyzes slow GTP hydrolysis, GTPase activity is stimulated by the 30S ribosomal subunit. The sequence is that of Small ribosomal subunit biogenesis GTPase RsgA from Lactobacillus johnsonii (strain CNCM I-12250 / La1 / NCC 533).